The sequence spans 544 residues: MAAKEVKFGNEARIKMLEGVNILADAVKVTLGPKGRNVVLDKSFGAPTITKDGVSVAREIELEDKFQNMGAQMVKEVASKANDAAGDGTTTATVLAQAIVNEGLKAVAAGMNPMDLKRGIDKAVIAAVAELQVLSQPCADNNAIAQVGTISANSDEKVGRLIAEAMDKVGRDGVITVEDGQGLDDELAVVEGMQFDRGYLSPYFVNKPETGAVELDDPFILLVDKKVSNIREMLPVLEGVAKAGKPLLIVAEDVEGEALATLVVNTMRGIVKVAAVKAPGFGDRRKAMLQDIAMLTGGTVISEEVGMELEKATLEDLGRAKRIVITKENTTIIDGVGDAALIESRVAQIRQQIEETSSDYDREKLQERVAKLAGGVAVIKVGAATEVEMKEKKARVDDALHATRAAVEEGVVAGGGVALVRVAAKLAGLRGDNEDQNVGIKVALRAMEAPLRQIVINAGEEASVIANAVKNGEGNFGYNAYTEQYGDMLAMGILDPTKVTRSALQFASSIAGLMITTECMITELPKKDTPAMPDMGGMGGMGMM.

Residues Thr30–Pro33, Lys51, Asp87–Thr91, Gly415, and Asp495 contribute to the ATP site.

This sequence belongs to the chaperonin (HSP60) family. In terms of assembly, forms a cylinder of 14 subunits composed of two heptameric rings stacked back-to-back. Interacts with the co-chaperonin GroES.

It is found in the cytoplasm. It carries out the reaction ATP + H2O + a folded polypeptide = ADP + phosphate + an unfolded polypeptide.. Functionally, together with its co-chaperonin GroES, plays an essential role in assisting protein folding. The GroEL-GroES system forms a nano-cage that allows encapsulation of the non-native substrate proteins and provides a physical environment optimized to promote and accelerate protein folding. The sequence is that of Chaperonin GroEL from Aeromonas salmonicida (strain A449).